A 109-amino-acid polypeptide reads, in one-letter code: Insulin (109 aa).

The first 24 residues, 1 to 24 (MAPWMHLLTVLALLALWGPNSVQA), serve as a signal peptide directing secretion. 3 cysteine pairs are disulfide-bonded: Cys-31–Cys-93, Cys-43–Cys-106, and Cys-92–Cys-97. Residues 56–84 (ELEDLQVEQAELGLEAGGLQPSALEMILQ) constitute a propeptide, c peptide.

Belongs to the insulin family. Heterodimer of a B chain and an A chain linked by two disulfide bonds.

Its subcellular location is the secreted. In terms of biological role, insulin decreases blood glucose concentration. It increases cell permeability to monosaccharides, amino acids and fatty acids. It accelerates glycolysis, the pentose phosphate cycle, and glycogen synthesis in liver. The protein is Insulin (INS) of Octodon degus (Degu).